A 430-amino-acid polypeptide reads, in one-letter code: Putative chloroquine resistance transporter (430 aa).

The disordered stretch occupies residues 1-22 (MLKEGSSLDLSASSSSGTLRSD). Over 1-53 (MLKEGSSLDLSASSSSGTLRSDNSFGNSPLDRITSLLILIYKSIRACFKWIYS) the chain is Cytoplasmic. The span at 7–21 (SLDLSASSSSGTLRS) shows a compositional bias: low complexity. A helical membrane pass occupies residues 54–74 (KSFGIICILFVILDVLTTVFF). Over 75–88 (KRFIDHTKNYVMFT) the chain is Vacuolar. A helical membrane pass occupies residues 89–109 (IQVIIFTFWIIVCCIAILCFL). Residues 110–122 (FNREYMKRHFNVR) lie on the Cytoplasmic side of the membrane. The chain crosses the membrane as a helical span at residues 123–143 (PLVFLGFLDMLSTGLSANGSA). Over 144–147 (HTSG) the chain is Vacuolar. Residues 148–168 (LMLVLLGQISVPLTMVSCKLI) traverse the membrane as a helical segment. Residues 169 to 173 (LSKKY) lie on the Cytoplasmic side of the membrane. A helical transmembrane segment spans residues 174-194 (HHYQYISSAIILTFAVLKPIL). The N-linked (GlcNAc...) asparagine glycan is linked to Asn195. The Vacuolar portion of the chain corresponds to 195-206 (NRTDTTDNRFYN). A helical transmembrane segment spans residues 207 to 223 (NMLYLLASVPDSIASAL). Over 224-239 (REKQYTSKFFHVVKYQ) the chain is Cytoplasmic. The helical transmembrane segment at 240–260 (FFGFLFHFFYNILYTLLFTLP) threads the bilayer. At 261 to 306 (FNSVKGYFDSLYKLCVNGYKCIFFGVNTITENCGPTLIPTCDNCLE) the chain is on the vacuolar side. 2 disulfides stabilise this stretch: Cys281/Cys304 and Cys293/Cys301. The chain crosses the membrane as a helical span at residues 307 to 329 (AFKIYCLYILFSSAIRVAYVFIM). Over 330–335 (LDGSVT) the chain is Cytoplasmic. Residues 336–358 (FTLLLGTVKVPLTSIAFSLRFIA) form a helical membrane-spanning segment. The Vacuolar segment spans residues 359-364 (GDSTTS). The helical transmembrane segment at 365 to 385 (FNLLDVVCFLGIVAGLLLYAL) threads the bilayer. Over 386–430 (GSKKIQEETDLLESPLIDDAESEHELLSTGTEKLMRSEICHDLFT) the chain is Cytoplasmic.

Belongs to the CRT-like transporter family.

The protein resides in the vacuole membrane. Its function is as follows. Nutrient transporter. Involved in maintaining the osmotic homeostasis of the digestive vacuole. The chain is Putative chloroquine resistance transporter from Theileria annulata.